A 432-amino-acid chain; its full sequence is G-protein coupled receptor 22 (432 aa).

Residues 1–45 are Extracellular-facing; that stretch reads MCFSPVLEINMQSESNVTVRDDIDDIDTNMYQPLSYPLSFQVSLT. N-linked (GlcNAc...) asparagine glycosylation occurs at asparagine 16. Residues 46-66 traverse the membrane as a helical segment; it reads GFLMLEIVLGLGSNLTVLVLY. At 67 to 85 the chain is on the cytoplasmic side; the sequence is CMKSNLINSVSNIITMNLH. The chain crosses the membrane as a helical span at residues 86-106; sequence VLDVIICVGCIPLTIVILLLS. Topologically, residues 107-115 are extracellular; that stretch reads LESNTALIC. The chain crosses the membrane as a helical span at residues 116–136; that stretch reads CFHEACVSFASVSTAINVFAI. Residues 137 to 156 are Cytoplasmic-facing; sequence TLDRYDISVKPANRILTMGR. The chain crosses the membrane as a helical span at residues 157-177; it reads AVMLMTSIWIFSFFSFLIPFI. Residues 178-208 are Extracellular-facing; the sequence is EVNFFSLQSGNTWANKTLLCVSTSEYYTELG. Asparagine 192 carries N-linked (GlcNAc...) asparagine glycosylation. A helical transmembrane segment spans residues 209 to 229; it reads MYYHLLVQIPIFFFTVIVMLI. Residues 230 to 314 are Cytoplasmic-facing; the sequence is TYTKILQALN…ERQKRVFKMS (85 aa). The helical transmembrane segment at 315–335 threads the bilayer; that stretch reads LLIISTFLLCWTPISVLNTTI. Residues 336-348 are Extracellular-facing; that stretch reads LCLGPSDLLVKLR. Residues 349 to 369 form a helical membrane-spanning segment; sequence LCFLVMAYGTTIFHPLLYAFT. At 370–432 the chain is on the cytoplasmic side; that stretch reads RQKFQKVLKS…KCLVPQVVTD (63 aa).

This sequence belongs to the G-protein coupled receptor 1 family. Abundant levels detected in the brain and heart and no detectable expression in other peripheral tissues.

It is found in the cell membrane. Orphan G-protein coupled receptor. Seems to act through a G(i)/G(o) mediated pathway. May be involved in ciliogenesis. This is G-protein coupled receptor 22 (Gpr22) from Mus musculus (Mouse).